The sequence spans 339 residues: Serpentine receptor class delta-32 (339 aa).

7 helical membrane-spanning segments follow: residues 14 to 34 (AAVVSTLGIIFNGFLLFLIFF), 45 to 65 (VFLANTSITQLGYCICFLLTV), 94 to 114 (IFTTMLHFAVNSFLSIMLSMV), 128 to 148 (SGAFAMCILAYMIPLSMVVSI), 188 to 208 (LWVACCVSILCIPIYSVMFWC), 237 to 257 (ALTVQSLIPVFTLFPASLIFL), and 269 to 289 (FGYIIISLLSLSPTIDPLVTI).

This sequence belongs to the nematode receptor-like protein srd family.

The protein resides in the membrane. This Caenorhabditis elegans protein is Serpentine receptor class delta-32 (srd-32).